Reading from the N-terminus, the 760-residue chain is MOXD1 homolog 2 (760 aa).

Positions 1-34 (MAHPRKAVATPATLQLGPPAQTAQSPAATLRHSR) are disordered. The span at 18–34 (PPAQTAQSPAATLRHSR) shows a compositional bias: low complexity. The chain crosses the membrane as a helical span at residues 47-67 (CFISCHTFNLFLLLLLLASGV). 3 N-linked (GlcNAc...) asparagine glycosylation sites follow: N78, N198, and N223. Residues 117 to 233 (DDFRILWQII…DTMRLLYMYH (117 aa)) form the DOMON domain. 3 disulfide bridges follow: C339–C367, C467–C581, and C543–C565. An N-linked (GlcNAc...) asparagine glycan is attached at N668. Residues 678 to 701 (RCKPKRPLAPPTERTAPPPASDLS) form a disordered region. A helical transmembrane segment spans residues 740–760 (FISCLLWLGASSWWLLLMLRT).

This sequence belongs to the copper type II ascorbate-dependent monooxygenase family.

Its subcellular location is the membrane. The protein is MOXD1 homolog 2 (olf413) of Drosophila melanogaster (Fruit fly).